The chain runs to 211 residues: tRNA (guanine-N(7)-)-methyltransferase (211 aa).

4 residues coordinate S-adenosyl-L-methionine: Glu44, Asp69, Asp96, and Asp118. Residue Asp118 is part of the active site. A substrate-binding site is contributed by Lys122. The tract at residues 124–129 (RHEKRR) is interaction with RNA. Substrate is bound by residues Asp154 and 191–194 (TEYE).

Belongs to the class I-like SAM-binding methyltransferase superfamily. TrmB family.

It carries out the reaction guanosine(46) in tRNA + S-adenosyl-L-methionine = N(7)-methylguanosine(46) in tRNA + S-adenosyl-L-homocysteine. The protein operates within tRNA modification; N(7)-methylguanine-tRNA biosynthesis. Catalyzes the formation of N(7)-methylguanine at position 46 (m7G46) in tRNA. This is tRNA (guanine-N(7)-)-methyltransferase from Streptococcus pneumoniae (strain Taiwan19F-14).